The sequence spans 342 residues: uncharacterized protein (342 aa).

The region spanning 155–309 (TYGIHINGYV…KPNCALVMVD (155 aa)) is the Nudix hydrolase domain.

This is an uncharacterized protein from Saccharomyces cerevisiae (strain ATCC 204508 / S288c) (Baker's yeast).